Reading from the N-terminus, the 386-residue chain is uncharacterized protein (386 aa).

2 consecutive transmembrane segments (helical) span residues 54–74 and 347–367; these read AVLQ…AIVA and LLGG…PIAG.

To M.tuberculosis Rv0628c.

It is found in the cell membrane. This is an uncharacterized protein from Mycobacterium tuberculosis (strain CDC 1551 / Oshkosh).